We begin with the raw amino-acid sequence, 507 residues long: Serine hydroxymethyltransferase (507 aa).

Lys283 carries the post-translational modification N6-(pyridoxal phosphate)lysine.

This sequence belongs to the SHMT family. As to quaternary structure, homotetramer. Pyridoxal 5'-phosphate serves as cofactor.

It catalyses the reaction (6R)-5,10-methylene-5,6,7,8-tetrahydrofolate + glycine + H2O = (6S)-5,6,7,8-tetrahydrofolate + L-serine. The protein operates within one-carbon metabolism; tetrahydrofolate interconversion. Interconversion of serine and glycine. The sequence is that of Serine hydroxymethyltransferase (mel-32) from Caenorhabditis elegans.